The sequence spans 49 residues: YLDHGLGAPAPYPDPLEPKREVCELNPDCDELADHIGFQEAYRRFYGPV.

Residues 1-47 (YLDHGLGAPAPYPDPLEPKREVCELNPDCDELADHIGFQEAYRRFYG) enclose the Gla domain. Proline 9 bears the Hydroxyproline mark. Residues glutamate 17, glutamate 21, glutamate 24, and aspartate 30 each contribute to the Ca(2+) site. A 4-carboxyglutamate mark is found at glutamate 17, glutamate 21, and glutamate 24. A disulfide bridge connects residues cysteine 23 and cysteine 29.

It belongs to the osteocalcin/matrix Gla protein family. In terms of processing, gamma-carboxyglutamic acid residues are formed by vitamin K dependent carboxylation. These residues are essential for the binding of calcium.

It is found in the secreted. The carboxylated form is one of the main organic components of the bone matrix, which constitutes 1-2% of the total bone protein: it acts as a negative regulator of bone formation and is required to limit bone formation without impairing bone resorption or mineralization. The carboxylated form binds strongly to apatite and calcium. Functionally, the uncarboxylated form acts as a hormone secreted by osteoblasts, which regulates different cellular processes, such as energy metabolism, male fertility and brain development. Regulates of energy metabolism by acting as a hormone favoring pancreatic beta-cell proliferation, insulin secretion and sensitivity and energy expenditure. Uncarboxylated osteocalcin hormone also promotes testosterone production in the testes: acts as a ligand for G protein-coupled receptor GPRC6A at the surface of Leydig cells, initiating a signaling response that promotes the expression of enzymes required for testosterone synthesis in a CREB-dependent manner. Also acts as a regulator of brain development: osteocalcin hormone crosses the blood-brain barrier and acts as a ligand for GPR158 on neurons, initiating a signaling response that prevents neuronal apoptosis in the hippocampus, favors the synthesis of all monoamine neurotransmitters and inhibits that of gamma-aminobutyric acid (GABA). Osteocalcin also crosses the placenta during pregnancy and maternal osteocalcin is required for fetal brain development. In Bison priscus (Steppe wisent), this protein is Osteocalcin (BGLAP).